We begin with the raw amino-acid sequence, 586 residues long: Aspartate--tRNA ligase (586 aa).

Glu-171 is a binding site for L-aspartate. Residues 195–198 (QLFK) form an aspartate region. Arg-217 serves as a coordination point for L-aspartate. ATP is bound by residues 217-219 (RDE) and Gln-226. Residue His-448 coordinates L-aspartate. Residue Glu-482 participates in ATP binding. An L-aspartate-binding site is contributed by Arg-489. Residue 534–537 (GLDR) coordinates ATP.

The protein belongs to the class-II aminoacyl-tRNA synthetase family. Type 1 subfamily. Homodimer.

The protein localises to the cytoplasm. The catalysed reaction is tRNA(Asp) + L-aspartate + ATP = L-aspartyl-tRNA(Asp) + AMP + diphosphate. Its function is as follows. Catalyzes the attachment of L-aspartate to tRNA(Asp) in a two-step reaction: L-aspartate is first activated by ATP to form Asp-AMP and then transferred to the acceptor end of tRNA(Asp). The chain is Aspartate--tRNA ligase from Buchnera aphidicola subsp. Acyrthosiphon pisum (strain 5A).